The sequence spans 110 residues: Transcription factor S (110 aa).

Positions 4, 7, 22, 25, 71, 74, 99, and 102 each coordinate Zn(2+). The C4-type zinc finger occupies 4-25 (CPKCGNLMLPDRKRKVWVCRSC). The segment at 67-107 (TKITCPKCGNDTAYWWEMQTRAGDEPSTIFYKCTKCGHTWR) adopts a TFIIS-type zinc-finger fold.

Belongs to the archaeal RpoM/eukaryotic RPA12/RPB9/RPC11 RNA polymerase family.

Its function is as follows. Induces RNA cleavage activity in the RNA polymerase. In its presence, the cleavage activity of the RNA polymerase truncates the RNA back to position +15 in a stepwise manner by releasing mainly dinucleotides from the 3'-end of the nascent RNA. The truncated RNAs are able to continue elongation. Involved in transcriptional proofreading and fidelity. Misincorporation of nucleotides during elongation of transcription leads to arrested elongation complexes which are rescued by TFS-promoted removal of a dinucleotide from the 3'-end. TFS is able to induce a cleavage resynthesis cycle in stalled elongation complexes (resulting from the next missing nucleotide or a reduced incorporation rate of a wrong nucleotide) preventing misincorporation and enabling proofreading in a post-incorporation manner. Pausing of elongation complexes is the main determinant of TFS-induced RNA cleavage. The chain is Transcription factor S from Thermococcus celer.